A 120-amino-acid chain; its full sequence is Small ribosomal subunit protein uS13 (120 aa).

The interval His92–Lys120 is disordered. Positions Ala107 to Lys120 are enriched in basic residues.

It belongs to the universal ribosomal protein uS13 family. In terms of assembly, part of the 30S ribosomal subunit. Forms a loose heterodimer with protein S19. Forms two bridges to the 50S subunit in the 70S ribosome.

Its function is as follows. Located at the top of the head of the 30S subunit, it contacts several helices of the 16S rRNA. In the 70S ribosome it contacts the 23S rRNA (bridge B1a) and protein L5 of the 50S subunit (bridge B1b), connecting the 2 subunits; these bridges are implicated in subunit movement. Contacts the tRNAs in the A and P-sites. This Helicobacter hepaticus (strain ATCC 51449 / 3B1) protein is Small ribosomal subunit protein uS13.